The following is a 457-amino-acid chain: Siroheme synthase (457 aa).

Positions 1 to 204 (MDHLPIFCQL…NDQKAITETT (204 aa)) are precorrin-2 dehydrogenase /sirohydrochlorin ferrochelatase. NAD(+) contacts are provided by residues 22–23 (DV) and 43–44 (LA). Ser128 is subject to Phosphoserine. The interval 216–457 (GEVVLVGAGP…RDKLNWFSNH (242 aa)) is uroporphyrinogen-III C-methyltransferase. Position 225 (Pro225) interacts with S-adenosyl-L-methionine. Asp248 serves as the catalytic Proton acceptor. The active-site Proton donor is the Lys270. S-adenosyl-L-methionine-binding positions include 301 to 303 (GGD), Ile306, 331 to 332 (TA), Met382, and Gly411.

This sequence in the N-terminal section; belongs to the precorrin-2 dehydrogenase / sirohydrochlorin ferrochelatase family. In the C-terminal section; belongs to the precorrin methyltransferase family.

It carries out the reaction uroporphyrinogen III + 2 S-adenosyl-L-methionine = precorrin-2 + 2 S-adenosyl-L-homocysteine + H(+). The enzyme catalyses precorrin-2 + NAD(+) = sirohydrochlorin + NADH + 2 H(+). The catalysed reaction is siroheme + 2 H(+) = sirohydrochlorin + Fe(2+). The protein operates within cofactor biosynthesis; adenosylcobalamin biosynthesis; precorrin-2 from uroporphyrinogen III: step 1/1. It functions in the pathway cofactor biosynthesis; adenosylcobalamin biosynthesis; sirohydrochlorin from precorrin-2: step 1/1. Its pathway is porphyrin-containing compound metabolism; siroheme biosynthesis; precorrin-2 from uroporphyrinogen III: step 1/1. It participates in porphyrin-containing compound metabolism; siroheme biosynthesis; siroheme from sirohydrochlorin: step 1/1. The protein operates within porphyrin-containing compound metabolism; siroheme biosynthesis; sirohydrochlorin from precorrin-2: step 1/1. Multifunctional enzyme that catalyzes the SAM-dependent methylations of uroporphyrinogen III at position C-2 and C-7 to form precorrin-2 via precorrin-1. Then it catalyzes the NAD-dependent ring dehydrogenation of precorrin-2 to yield sirohydrochlorin. Finally, it catalyzes the ferrochelation of sirohydrochlorin to yield siroheme. The polypeptide is Siroheme synthase (Escherichia coli O81 (strain ED1a)).